Reading from the N-terminus, the 220-residue chain is Small ribosomal subunit protein uS3c (220 aa).

The 72-residue stretch at 48-119 (VQKHTNNPFH…KLCLILIKID (72 aa)) folds into the KH type-2 domain.

The protein belongs to the universal ribosomal protein uS3 family. Part of the 30S ribosomal subunit.

It localises to the plastid. The protein localises to the chloroplast. This chain is Small ribosomal subunit protein uS3c (rps3), found in Psilotum nudum (Whisk fern).